A 268-amino-acid polypeptide reads, in one-letter code: Tryptophan synthase alpha chain (268 aa).

Active-site proton acceptor residues include Glu-49 and Asp-60.

The protein belongs to the TrpA family. As to quaternary structure, tetramer of two alpha and two beta chains.

It catalyses the reaction (1S,2R)-1-C-(indol-3-yl)glycerol 3-phosphate + L-serine = D-glyceraldehyde 3-phosphate + L-tryptophan + H2O. Its pathway is amino-acid biosynthesis; L-tryptophan biosynthesis; L-tryptophan from chorismate: step 5/5. Functionally, the alpha subunit is responsible for the aldol cleavage of indoleglycerol phosphate to indole and glyceraldehyde 3-phosphate. The chain is Tryptophan synthase alpha chain from Escherichia coli (strain SMS-3-5 / SECEC).